The chain runs to 500 residues: Galactofuranose transporter ATP-binding protein YtfR (500 aa).

ABC transporter domains follow at residues 10–245 and 259–497; these read LRTE…LGRE and LSDK…IMNA. 42–49 provides a ligand contact to ATP; that stretch reads GENGAGKS.

It belongs to the ABC transporter superfamily. The complex is composed of two ATP-binding proteins (YtfR), two transmembrane proteins (YtfT and YjfF) and a solute-binding protein (YtfQ).

Its subcellular location is the cell inner membrane. The enzyme catalyses D-galactofuranose(out) + ATP + H2O = D-galactofuranose(in) + ADP + phosphate + H(+). In terms of biological role, part of the ABC transporter complex YtfQRT-YjfF involved in galactofuranose transport. Responsible for energy coupling to the transport system. The polypeptide is Galactofuranose transporter ATP-binding protein YtfR (ytfR) (Escherichia coli O157:H7).